The primary structure comprises 214 residues: Adenylate kinase (214 aa).

Position 10–15 (10–15 (GAGKGT)) interacts with ATP. The segment at 30-59 (STGDIFRANIKGNTPLGQKAKEYMDKGELV) is NMP. AMP contacts are provided by residues Thr31, Arg36, 57 to 59 (ELV), 85 to 88 (GFPR), and Gln92. The LID stretch occupies residues 126-163 (GRRVCTNCGATYNVVFNPTKVEGICDVCNSPVIQRADD). Arg127 lines the ATP pocket. Cys130 and Cys133 together coordinate Zn(2+). An ATP-binding site is contributed by 136–137 (TY). Residues Cys150 and Cys153 each contribute to the Zn(2+) site. 2 residues coordinate AMP: Arg160 and Arg171. Position 199 (Gly199) interacts with ATP.

It belongs to the adenylate kinase family. Monomer.

The protein localises to the cytoplasm. The catalysed reaction is AMP + ATP = 2 ADP. It participates in purine metabolism; AMP biosynthesis via salvage pathway; AMP from ADP: step 1/1. In terms of biological role, catalyzes the reversible transfer of the terminal phosphate group between ATP and AMP. Plays an important role in cellular energy homeostasis and in adenine nucleotide metabolism. In Ruminiclostridium cellulolyticum (strain ATCC 35319 / DSM 5812 / JCM 6584 / H10) (Clostridium cellulolyticum), this protein is Adenylate kinase.